A 289-amino-acid chain; its full sequence is ATP synthase gamma chain (289 aa).

The protein belongs to the ATPase gamma chain family. In terms of assembly, F-type ATPases have 2 components, CF(1) - the catalytic core - and CF(0) - the membrane proton channel. CF(1) has five subunits: alpha(3), beta(3), gamma(1), delta(1), epsilon(1). CF(0) has three main subunits: a, b and c.

It localises to the cell inner membrane. Functionally, produces ATP from ADP in the presence of a proton gradient across the membrane. The gamma chain is believed to be important in regulating ATPase activity and the flow of protons through the CF(0) complex. This chain is ATP synthase gamma chain, found in Azorhizobium caulinodans (strain ATCC 43989 / DSM 5975 / JCM 20966 / LMG 6465 / NBRC 14845 / NCIMB 13405 / ORS 571).